The primary structure comprises 90 residues: Putative regulatory protein Dred_1699 (90 aa).

The protein belongs to the RemA family.

This is Putative regulatory protein Dred_1699 from Desulforamulus reducens (strain ATCC BAA-1160 / DSM 100696 / MI-1) (Desulfotomaculum reducens).